The primary structure comprises 120 residues: NAD(P)H-quinone oxidoreductase subunit 3, chloroplastic (120 aa).

3 helical membrane-spanning segments follow: residues 9–29, 64–84, and 88–108; these read IFWT…WISG, MFAL…PWAM, and VLGV…VVGL.

Belongs to the complex I subunit 3 family. NDH is composed of at least 16 different subunits, 5 of which are encoded in the nucleus.

Its subcellular location is the plastid. It localises to the chloroplast thylakoid membrane. It catalyses the reaction a plastoquinone + NADH + (n+1) H(+)(in) = a plastoquinol + NAD(+) + n H(+)(out). It carries out the reaction a plastoquinone + NADPH + (n+1) H(+)(in) = a plastoquinol + NADP(+) + n H(+)(out). Its function is as follows. NDH shuttles electrons from NAD(P)H:plastoquinone, via FMN and iron-sulfur (Fe-S) centers, to quinones in the photosynthetic chain and possibly in a chloroplast respiratory chain. The immediate electron acceptor for the enzyme in this species is believed to be plastoquinone. Couples the redox reaction to proton translocation, and thus conserves the redox energy in a proton gradient. The polypeptide is NAD(P)H-quinone oxidoreductase subunit 3, chloroplastic (Agrostis stolonifera (Creeping bentgrass)).